The chain runs to 583 residues: CTP synthase (583 aa).

Residues 1–278 form an amidoligase domain region; the sequence is MRRHPQTATK…DAFVVRRLNL (278 aa). Ser20 serves as a coordination point for CTP. Ser20 provides a ligand contact to UTP. Residues 21–26 and Asp78 each bind ATP; that span reads SLGKGL. Mg(2+) contacts are provided by Asp78 and Glu152. CTP is bound by residues 159-161, 199-204, and Lys235; these read DIE and KTKPTQ. UTP is bound by residues 199-204 and Lys235; that span reads KTKPTQ. One can recognise a Glutamine amidotransferase type-1 domain in the interval 303 to 551; that stretch reads RIALVGKYVE…VKAAIDYKEG (249 aa). Gly366 is an L-glutamine binding site. Cys393 functions as the Nucleophile; for glutamine hydrolysis in the catalytic mechanism. L-glutamine contacts are provided by residues 394 to 397, Glu416, and Arg477; that span reads LGLQ. Active-site residues include His524 and Glu526. The tract at residues 559–583 is disordered; sequence PERVSNGAERRDQVGQSIPEPANRG.

Belongs to the CTP synthase family. In terms of assembly, homotetramer.

The catalysed reaction is UTP + L-glutamine + ATP + H2O = CTP + L-glutamate + ADP + phosphate + 2 H(+). The enzyme catalyses L-glutamine + H2O = L-glutamate + NH4(+). It carries out the reaction UTP + NH4(+) + ATP = CTP + ADP + phosphate + 2 H(+). It functions in the pathway pyrimidine metabolism; CTP biosynthesis via de novo pathway; CTP from UDP: step 2/2. Its activity is regulated as follows. Allosterically activated by GTP, when glutamine is the substrate; GTP has no effect on the reaction when ammonia is the substrate. The allosteric effector GTP functions by stabilizing the protein conformation that binds the tetrahedral intermediate(s) formed during glutamine hydrolysis. Inhibited by the product CTP, via allosteric rather than competitive inhibition. Functionally, catalyzes the ATP-dependent amination of UTP to CTP with either L-glutamine or ammonia as the source of nitrogen. Regulates intracellular CTP levels through interactions with the four ribonucleotide triphosphates. This Mycobacterium ulcerans (strain Agy99) protein is CTP synthase.